The following is a 94-amino-acid chain: Integration host factor subunit beta (94 aa).

The protein belongs to the bacterial histone-like protein family. As to quaternary structure, heterodimer of an alpha and a beta chain.

Functionally, this protein is one of the two subunits of integration host factor, a specific DNA-binding protein that functions in genetic recombination as well as in transcriptional and translational control. This Photorhabdus laumondii subsp. laumondii (strain DSM 15139 / CIP 105565 / TT01) (Photorhabdus luminescens subsp. laumondii) protein is Integration host factor subunit beta.